The primary structure comprises 193 residues: Ion-translocating oxidoreductase complex subunit A (193 aa).

A run of 6 helical transmembrane segments spans residues 5–25 (LLLL…FLGL), 39–59 (MGMG…AWAV), 62–82 (FILV…LVIA), 102–122 (LLGI…VALL), 134–154 (AVYG…FAAI), and 171–191 (SIAL…SGLV).

It belongs to the NqrDE/RnfAE family. As to quaternary structure, the complex is composed of six subunits: RnfA, RnfB, RnfC, RnfD, RnfE and RnfG.

Its subcellular location is the cell inner membrane. Functionally, part of a membrane-bound complex that couples electron transfer with translocation of ions across the membrane. This is Ion-translocating oxidoreductase complex subunit A from Edwardsiella ictaluri (strain 93-146).